The chain runs to 37 residues: Dolichyl-diphosphooligosaccharide--protein glycosyltransferase subunit 4A (37 aa).

Over 1–7 (MIDDQDL) the chain is Lumenal. The helical transmembrane segment at 8 to 28 (GFIANFLGIFIFALVIAYHYV) threads the bilayer. Residues 29 to 37 (TADPKYEAT) lie on the Cytoplasmic side of the membrane.

This sequence belongs to the OST4 family. Component of the oligosaccharyltransferase (OST) complex.

The protein resides in the endoplasmic reticulum membrane. Subunit of the oligosaccharyl transferase (OST) complex that catalyzes the initial transfer of a defined glycan (Glc(3)Man(9)GlcNAc(2) in eukaryotes) from the lipid carrier dolichol-pyrophosphate to an asparagine residue within an Asn-X-Ser/Thr consensus motif in nascent polypeptide chains, the first step in protein N-glycosylation. N-glycosylation occurs cotranslationally and the complex associates with the Sec61 complex at the channel-forming translocon complex that mediates protein translocation across the endoplasmic reticulum (ER). All subunits are required for a maximal enzyme activity. The polypeptide is Dolichyl-diphosphooligosaccharide--protein glycosyltransferase subunit 4A (OST4A) (Arabidopsis thaliana (Mouse-ear cress)).